The following is a 222-amino-acid chain: UPF0128 protein PYRAB08320 (222 aa).

Belongs to the UPF0128 family.

This Pyrococcus abyssi (strain GE5 / Orsay) protein is UPF0128 protein PYRAB08320.